Consider the following 357-residue polypeptide: tRNA-specific 2-thiouridylase MnmA (357 aa).

ATP is bound by residues alanine 6–serine 13 and leucine 32. Catalysis depends on cysteine 101, which acts as the Nucleophile. A disulfide bridge links cysteine 101 with cysteine 193. Glycine 125 contributes to the ATP binding site. The interaction with tRNA stretch occupies residues lysine 143–glutamine 145. Cysteine 193 acts as the Cysteine persulfide intermediate in catalysis.

The protein belongs to the MnmA/TRMU family.

It is found in the cytoplasm. The catalysed reaction is S-sulfanyl-L-cysteinyl-[protein] + uridine(34) in tRNA + AH2 + ATP = 2-thiouridine(34) in tRNA + L-cysteinyl-[protein] + A + AMP + diphosphate + H(+). Its function is as follows. Catalyzes the 2-thiolation of uridine at the wobble position (U34) of tRNA, leading to the formation of s(2)U34. The polypeptide is tRNA-specific 2-thiouridylase MnmA (Mycolicibacterium vanbaalenii (strain DSM 7251 / JCM 13017 / BCRC 16820 / KCTC 9966 / NRRL B-24157 / PYR-1) (Mycobacterium vanbaalenii)).